The primary structure comprises 81 residues: MSADYDITETLDVKGASCPMPVVKTKSAIDDLAEGEILEVLATDSGSMSDIDGWASGTAGVELVDQEEGDDVYKHYVRKTK.

Cysteine 18 functions as the Cysteine persulfide intermediate in the catalytic mechanism.

Belongs to the sulfur carrier protein TusA family.

This is Putative sulfur carrier protein VNG_5061C/VNG_5236C/VNG_6059C/VNG_6467C from Halobacterium salinarum (strain ATCC 700922 / JCM 11081 / NRC-1) (Halobacterium halobium).